Here is a 58-residue protein sequence, read N- to C-terminus: Small ribosomal subunit protein bS21B (58 aa).

It belongs to the bacterial ribosomal protein bS21 family.

The sequence is that of Small ribosomal subunit protein bS21B (rpsU2) from Nostoc sp. (strain PCC 7120 / SAG 25.82 / UTEX 2576).